We begin with the raw amino-acid sequence, 384 residues long: Sphingosine 1-phosphate receptor 4 (384 aa).

The Extracellular portion of the chain corresponds to 1–50 (MNATGTPVAPESCQQLAAGGHSRLIVLHYNHSGRLAGRGGPEDGGLGALR). N-linked (GlcNAc...) asparagine glycans are attached at residues asparagine 2 and asparagine 30. The chain crosses the membrane as a helical span at residues 51 to 71 (GLSVAASCLVVLENLLVLAAI). The Cytoplasmic portion of the chain corresponds to 72 to 84 (TSHMRSRRWVYYC). The chain crosses the membrane as a helical span at residues 85–105 (LVNITLSDLLTGAAYLANVLL). Residues 106 to 117 (SGARTFRLAPAQ) lie on the Extracellular side of the membrane. A helical membrane pass occupies residues 118–138 (WFLREGLLFTALAASTFSLLF). The Cytoplasmic portion of the chain corresponds to 139–161 (TAGERFATMVRPVAESGATKTSR). A helical transmembrane segment spans residues 162–182 (VYGFIGLCWLLAALLGMLPLL). Topologically, residues 183–206 (GWNCLCAFDRCSSLLPLYSKRYIL) are extracellular. A helical membrane pass occupies residues 207-227 (FCLVIFAGVLATIMGLYGAIF). Topologically, residues 228–252 (RLVQASGQKAPRPAARRKARRLLKT) are cytoplasmic. The chain crosses the membrane as a helical span at residues 253–273 (VLMILLAFLVCWGPLFGLLLA). Residues 274 to 288 (DVFGSNLWAQEYLRG) lie on the Extracellular side of the membrane. The helical transmembrane segment at 289–309 (MDWILALAVLNSAVNPIIYSF) threads the bilayer. Topologically, residues 310 to 384 (RSREVCRAVL…LSSISSVRSI (75 aa)) are cytoplasmic. Cysteine 323 is lipidated: S-palmitoyl cysteine.

Belongs to the G-protein coupled receptor 1 family. In terms of tissue distribution, specifically expressed in fetal and adult lymphoid and hematopoietic tissue as well as in lung. Considerable level of expression in adult and fetal spleen as well as adult peripheral leukocytes and lung. Lower expression in adult thymus, lymph node, bone marrow, and appendix as well as in fetal liver, thymus, and lung.

The protein resides in the cell membrane. Its function is as follows. Receptor for the lysosphingolipid sphingosine 1-phosphate (S1P). S1P is a bioactive lysophospholipid that elicits diverse physiological effect on most types of cells and tissues. May be involved in cell migration processes that are specific for lymphocytes. The chain is Sphingosine 1-phosphate receptor 4 (S1PR4) from Homo sapiens (Human).